A 459-amino-acid chain; its full sequence is MAKVWSKRFDNALDPFIEKFNASIGFDKKLILEDLDCSIAHAKMLGKTKVLSPSETLQIINGLESIKVEYLEGKFSPSLPSEDIHYCIEHKLISLIGETGKKLHTGRSRNDQVGTDIRLWLRKEIDNIEILIADLQKSFLNLAKANIYTLIPGYTHMQRAQPLSLAHHLLAYIEMLQRDRERFKEVRGRVNISPLGAAALAGTKIKIDRHFTAAELGFEKIYKNSIDAVSDRDFCIEFVSTSALLMSHLSKISEEIILWVTDEFSFAKLTDKCATGSSLMPQKKNPDVPELIRGKTGRVYGHLQALLTMVKGVPLSYNKDFQEDKEPIFDTAETISSCITAMTILLNEGIEFNIQNLSDSVENDFSNATDLADYLVSKDVPFRTAYQVVGEIVKYCLKRKMLFKNLKIDEFKKFHPEFDEDVFVDLKPFNVVKSRNSEGGTGFAQVEKEVKNWQKKLSI.

This sequence belongs to the lyase 1 family. Argininosuccinate lyase subfamily.

Its subcellular location is the cytoplasm. The enzyme catalyses 2-(N(omega)-L-arginino)succinate = fumarate + L-arginine. The protein operates within amino-acid biosynthesis; L-arginine biosynthesis; L-arginine from L-ornithine and carbamoyl phosphate: step 3/3. In Prochlorococcus marinus (strain MIT 9301), this protein is Argininosuccinate lyase.